A 292-amino-acid polypeptide reads, in one-letter code: Diaminopimelate epimerase (292 aa).

Positions 13, 46, and 66 each coordinate substrate. The active-site Proton donor is C75. Residues 76–77 (GN), N170, N203, and 221–222 (ER) each bind substrate. C230 functions as the Proton acceptor in the catalytic mechanism. Residue 231 to 232 (GT) coordinates substrate.

It belongs to the diaminopimelate epimerase family. Homodimer.

It localises to the cytoplasm. The enzyme catalyses (2S,6S)-2,6-diaminopimelate = meso-2,6-diaminopimelate. Its pathway is amino-acid biosynthesis; L-lysine biosynthesis via DAP pathway; DL-2,6-diaminopimelate from LL-2,6-diaminopimelate: step 1/1. Functionally, catalyzes the stereoinversion of LL-2,6-diaminopimelate (L,L-DAP) to meso-diaminopimelate (meso-DAP), a precursor of L-lysine and an essential component of the bacterial peptidoglycan. The polypeptide is Diaminopimelate epimerase (Acidovorax ebreus (strain TPSY) (Diaphorobacter sp. (strain TPSY))).